The primary structure comprises 61 residues: MAKCFVTGKKKSFGNTRSHAMNANRRTWKANLQKVRILVDGKPKRVWVSARALKSGKIKRV.

This sequence belongs to the bacterial ribosomal protein bL28 family.

The protein is Large ribosomal subunit protein bL28 of Geobacillus thermodenitrificans (strain NG80-2).